The chain runs to 202 residues: MKALTARQQEVFDLIRDHISQTGMPPTRAEIAQRLGFRSPNAAEEHLKALARKGVLEIVSGASRGIRLLQEEEDGLPLVGRVAAGEPLLAQQHIEGHYQVDPSLFKPSADFLLRVSGMSMKDIGIMDGDLLAVHKTQDVRNGQVVVARIDDEVTVKRLKKQGNKVELLPENSEFTPIVVDLREQSFTIEGLAVGVIRNGEWL.

Residues 28-48 constitute a DNA-binding region (H-T-H motif); sequence RAEIAQRLGFRSPNAAEEHLK. Catalysis depends on for autocatalytic cleavage activity residues Ser-119 and Lys-156.

This sequence belongs to the peptidase S24 family. Homodimer.

It catalyses the reaction Hydrolysis of Ala-|-Gly bond in repressor LexA.. Represses a number of genes involved in the response to DNA damage (SOS response), including recA and lexA. Binds to the 16 bp palindromic sequence 5'-CTGTATATATATACAG-3'. In the presence of single-stranded DNA, RecA interacts with LexA causing an autocatalytic cleavage which disrupts the DNA-binding part of LexA, leading to derepression of the SOS regulon and eventually DNA repair. This is LexA repressor from Salmonella agona (strain SL483).